Here is a 444-residue protein sequence, read N- to C-terminus: Glycine receptor subunit alphaZ1 (444 aa).

The N-terminal stretch at 1 to 24 (MFALGIYLWETIVFFSLAASQQAA) is a signal peptide. The Extracellular segment spans residues 25 to 246 (ARKAASPMPP…RFHLERQMGY (222 aa)). Residue Asn62 is glycosylated (N-linked (GlcNAc...) asparagine). 2 residues coordinate glycine: Arg89 and Ser153. Cys162 and Cys176 form a disulfide bridge. Glu216 and Asp218 together coordinate Zn(2+). Residues Cys222 and Cys233 are joined by a disulfide bond. 226–231 (YNTGKF) contributes to the strychnine binding site. Thr228 provides a ligand contact to glycine. His239 is a binding site for Zn(2+). Residues 247–268 (YLIQMYIPSLLIVILSWVSFWI) traverse the membrane as a helical segment. Topologically, residues 269-273 (NMDAA) are cytoplasmic. A helical membrane pass occupies residues 274 to 294 (PARVGLGITTVLTMTTQSSGS). Residues 295-305 (RASLPKVSYVK) are Extracellular-facing. The helical transmembrane segment at 306–326 (AIDIWMAVCLLFVFSALLEYA) threads the bilayer. The Cytoplasmic portion of the chain corresponds to 327 to 412 (AVNFIARQHK…FISRAKRIDT (86 aa)). Residues 413 to 433 (VSRVAFPLVFLIFNIFYWITY) form a helical membrane-spanning segment. Residues 434–444 (KIIRSEDIHKQ) are Extracellular-facing.

The protein belongs to the ligand-gated ion channel (TC 1.A.9) family. Glycine receptor (TC 1.A.9.3) subfamily. GLRA1 sub-subfamily. As to quaternary structure, homopentamer (in vitro). Heteropentamer composed of glra1 and glrb. Both homopentamers and heteropentamers form functional ion channels. Interacts with glrb. In terms of tissue distribution, expressed in brain.

The protein localises to the postsynaptic cell membrane. Its subcellular location is the synapse. It is found in the perikaryon. It localises to the cell projection. The protein resides in the dendrite. The protein localises to the cell membrane. The catalysed reaction is chloride(in) = chloride(out). With respect to regulation, activated by glycine and taurine. Inhibited by strychnine. Allosterically activated by ivermectin. Inhibited by picrotoxinin. Strychnine binding locks the channel in a closed conformation and prevents channel opening in response to extracellular glycine. Can also be activated by GABA and inhibited by bicuculline, but this requires heterologous expression in human cells. Subunit of heteromeric glycine-gated chloride channels. Plays an important role in the down-regulation of neuronal excitability. Contributes to the generation of inhibitory postsynaptic currents. Channel activity is potentiated by ethanol. This chain is Glycine receptor subunit alphaZ1 (glra1), found in Danio rerio (Zebrafish).